The sequence spans 332 residues: Decaprenyl-phosphate phosphoribosyltransferase (332 aa).

The segment covering 1–12 (MSEHAAEHHRDT) has biased composition (basic and acidic residues). Positions 1 to 36 (MSEHAAEHHRDTQNFLTSEPHTTAIEDNKKRQPPKN) are disordered. Helical transmembrane passes span 50-70 (WVKNVLVLAAPLAAGADAIFN) and 74-94 (IIDVAIAFVVFCFGASAIYLV). Residues Lys52 and Tyr92 each contribute to the 5-phospho-alpha-D-ribose 1-diphosphate site. Asn95 and Asp99 together coordinate Mg(2+). Lys109 contributes to the 5-phospho-alpha-D-ribose 1-diphosphate binding site. The next 2 membrane-spanning stretches (helical) occupy residues 114–134 (IAAGVLPVGMAYGMAVALIAL) and 146–166 (VALACVIGVYIALQLGYCFGW). Lys167 and Arg184 together coordinate 5-phospho-alpha-D-ribose 1-diphosphate. 2 helical membrane passes run 169-189 (MPVIDIALVSSGFMLRAMAGG) and 190-210 (VAAGIELSQWFLLVAAFGSLF). Lys215 is a binding site for trans,octa-cis-decaprenyl phosphate. A run of 3 helical transmembrane segments spans residues 244-264 (FVWTMAATAVVMSYALWGFDL), 273-293 (PWYQISMVPFTIAILRYAAGV), and 310-330 (VLQVLALAWVFCIVMAVYIMP).

This sequence belongs to the UbiA prenyltransferase family. DPPR synthase subfamily. Mg(2+) is required as a cofactor.

Its subcellular location is the cell inner membrane. It catalyses the reaction trans,octa-cis-decaprenyl phosphate + 5-phospho-alpha-D-ribose 1-diphosphate + H(+) = trans,octa-cis-decaprenylphospho-beta-D-ribofuranose 5-phosphate + diphosphate. It participates in cell wall biogenesis; cell wall polysaccharide biosynthesis. Involved in the biosynthesis of decaprenylphosphoryl arabinose (DPA) a precursor for arabinan synthesis in mycobacterial cell wall biosynthesis. Catalyzes the transfer of a 5-phosphoribosyl residue from phosphoribose diphosphate (PRPP) to decaprenyl phosphate (DP) to form decaprenylphosphoryl-5-phosphoribose (DPPR). The polypeptide is Decaprenyl-phosphate phosphoribosyltransferase (Corynebacterium glutamicum (strain ATCC 13032 / DSM 20300 / JCM 1318 / BCRC 11384 / CCUG 27702 / LMG 3730 / NBRC 12168 / NCIMB 10025 / NRRL B-2784 / 534)).